Consider the following 26-residue polypeptide: Nicotinic acetylcholine receptor-binding protein Mnn-1A (26 aa).

Cys-3 and Cys-22 are joined by a disulfide.

Belongs to the three-finger toxin family. Short-chain subfamily. In terms of tissue distribution, expressed by the venom gland.

The protein localises to the secreted. In terms of biological role, binds and may inhibit nicotinic acetylcholine receptors (nAChR). This chain is Nicotinic acetylcholine receptor-binding protein Mnn-1A, found in Micrurus nigrocinctus (Central American coral snake).